We begin with the raw amino-acid sequence, 85 residues long: Contulakin-Lt1 (85 aa).

Residues Met1–Gly22 form the signal peptide. A propeptide spanning residues Arg23 to Leu60 is cleaved from the precursor. Cys65 and Cys70 form a disulfide bridge. Residues Arg76 to Lys85 constitute a propeptide that is removed on maturation.

It belongs to the conotoxin C superfamily. In terms of tissue distribution, expressed by the venom duct.

It localises to the secreted. Acts as an agonist of neurotensin receptors. It binds to human neurotensin type 1 receptor (NTSR1), rat neurotensin types 1 and 2 receptors (NTSR1/NTSR2) and mouse neurotensin type 3 receptor (SORT1). The sequence is that of Contulakin-Lt1 from Conus litteratus (Lettered cone).